The sequence spans 243 residues: 1-(5-phosphoribosyl)-5-[(5-phosphoribosylamino)methylideneamino] imidazole-4-carboxamide isomerase (243 aa).

The Proton acceptor role is filled by Asp-10. The active-site Proton donor is Asp-128.

This sequence belongs to the HisA/HisF family.

Its subcellular location is the cytoplasm. The catalysed reaction is 1-(5-phospho-beta-D-ribosyl)-5-[(5-phospho-beta-D-ribosylamino)methylideneamino]imidazole-4-carboxamide = 5-[(5-phospho-1-deoxy-D-ribulos-1-ylimino)methylamino]-1-(5-phospho-beta-D-ribosyl)imidazole-4-carboxamide. It functions in the pathway amino-acid biosynthesis; L-histidine biosynthesis; L-histidine from 5-phospho-alpha-D-ribose 1-diphosphate: step 4/9. The protein is 1-(5-phosphoribosyl)-5-[(5-phosphoribosylamino)methylideneamino] imidazole-4-carboxamide isomerase of Helicobacter hepaticus (strain ATCC 51449 / 3B1).